The chain runs to 191 residues: MANVDRDRRVHVDRTDKRVHQPNYEDDVGFGGYGGYGAGSDYKSRGPSTNQILALIAGVPIGGTLLTLAGLTLAGSVIGLLVSIPLFLLFSPVIVPAALTIGLAVTGILASGLFGLTGLSSVSWVLNYLRGTSDTVPEQLDYAKRRMADAVGYAGMKGKEMGQYVQDKAHEARETEFMTETHEPGKARRGS.

At A2 the chain carries N-acetylalanine. The interval 2–54 (ANVDRDRRVHVDRTDKRVHQPNYEDDVGFGGYGGYGAGSDYKSRGPSTNQILA) is polar. A run of 2 helical transmembrane segments spans residues 52 to 72 (ILALIAGVPIGGTLLTLAGLT) and 99 to 119 (LTIGLAVTGILASGLFGLTGL). The hydrophobic stretch occupies residues 55–128 (LIAGVPIGGT…LSSVSWVLNY (74 aa)).

The protein belongs to the oleosin family.

It localises to the lipid droplet. It is found in the membrane. In terms of biological role, may have a structural role to stabilize the lipid body during desiccation of the seed by preventing coalescence of the oil. Probably interacts with both lipid and phospholipid moieties of lipid bodies. May also provide recognition signals for specific lipase anchorage in lipolysis during seedling growth. The sequence is that of Oleosin 20.3 kDa (OL2) from Arabidopsis thaliana (Mouse-ear cress).